The chain runs to 203 residues: Proteasome subunit beta 2 (203 aa).

Residues 1-10 constitute a propeptide, removed in mature form; by autocatalysis; the sequence is MNLQNKILKG. The active-site Nucleophile is the Thr11.

The protein belongs to the peptidase T1B family. As to quaternary structure, the 20S proteasome core is composed of 14 alpha and 14 beta subunits that assemble into four stacked heptameric rings, resulting in a barrel-shaped structure. The two inner rings, each composed of seven catalytic beta subunits, are sandwiched by two outer rings, each composed of seven alpha subunits. The catalytic chamber with the active sites is on the inside of the barrel. Has a gated structure, the ends of the cylinder being occluded by the N-termini of the alpha-subunits. Is capped at one or both ends by the proteasome regulatory ATPase, PAN.

The protein localises to the cytoplasm. It catalyses the reaction Cleavage of peptide bonds with very broad specificity.. With respect to regulation, the formation of the proteasomal ATPase PAN-20S proteasome complex, via the docking of the C-termini of PAN into the intersubunit pockets in the alpha-rings, triggers opening of the gate for substrate entry. Interconversion between the open-gate and close-gate conformations leads to a dynamic regulation of the 20S proteasome proteolysis activity. Functionally, component of the proteasome core, a large protease complex with broad specificity involved in protein degradation. The chain is Proteasome subunit beta 2 from Sulfolobus acidocaldarius (strain ATCC 33909 / DSM 639 / JCM 8929 / NBRC 15157 / NCIMB 11770).